Reading from the N-terminus, the 89-residue chain is Large ribosomal subunit protein eL43 (89 aa).

Residues 1 to 28 are disordered; the sequence is MVKKSKVGSTGRFGARYGRKAKRTVKDI. The C4-type zinc finger occupies 38 to 59; that stretch reads CPKCDRPGVKRTHAGIWKCRKC.

The protein belongs to the eukaryotic ribosomal protein eL43 family. Zn(2+) serves as cofactor.

The protein is Large ribosomal subunit protein eL43 of Methanosphaera stadtmanae (strain ATCC 43021 / DSM 3091 / JCM 11832 / MCB-3).